The primary structure comprises 215 residues: Phosphatidylserine decarboxylase proenzyme (215 aa).

The active-site Schiff-base intermediate with substrate; via pyruvic acid is the S183. S183 is subject to Pyruvic acid (Ser); by autocatalysis.

Belongs to the phosphatidylserine decarboxylase family. PSD-A subfamily. In terms of assembly, heterodimer of a large membrane-associated beta subunit and a small pyruvoyl-containing alpha subunit. Pyruvate is required as a cofactor. Is synthesized initially as an inactive proenzyme. Formation of the active enzyme involves a self-maturation process in which the active site pyruvoyl group is generated from an internal serine residue via an autocatalytic post-translational modification. Two non-identical subunits are generated from the proenzyme in this reaction, and the pyruvate is formed at the N-terminus of the alpha chain, which is derived from the carboxyl end of the proenzyme. The post-translation cleavage follows an unusual pathway, termed non-hydrolytic serinolysis, in which the side chain hydroxyl group of the serine supplies its oxygen atom to form the C-terminus of the beta chain, while the remainder of the serine residue undergoes an oxidative deamination to produce ammonia and the pyruvoyl prosthetic group on the alpha chain.

It is found in the cell membrane. The enzyme catalyses a 1,2-diacyl-sn-glycero-3-phospho-L-serine + H(+) = a 1,2-diacyl-sn-glycero-3-phosphoethanolamine + CO2. Its pathway is phospholipid metabolism; phosphatidylethanolamine biosynthesis; phosphatidylethanolamine from CDP-diacylglycerol: step 2/2. Functionally, catalyzes the formation of phosphatidylethanolamine (PtdEtn) from phosphatidylserine (PtdSer). This chain is Phosphatidylserine decarboxylase proenzyme, found in Symbiobacterium thermophilum (strain DSM 24528 / JCM 14929 / IAM 14863 / T).